The primary structure comprises 207 residues: CASP-like protein F16 (207 aa).

The tract at residues 1 to 30 is disordered; it reads MEKSEKGNGVAPATRSPMALMGSSRNENQE. The Cytoplasmic segment spans residues 1–37; it reads MEKSEKGNGVAPATRSPMALMGSSRNENQEVNTSMRT. A helical transmembrane segment spans residues 38–58; it reads AETMLRLVPMALGVAALVVML. Residues 59 to 79 are Extracellular-facing; sequence KNSQSNDFGSVSYSDLGAFRY. Residues 80-100 traverse the membrane as a helical segment; that stretch reads LVHANGICAGYSLLSAIIAAV. Topologically, residues 101 to 108 are cytoplasmic; it reads PSPSTMPR. The chain crosses the membrane as a helical span at residues 109–129; it reads AWTFFLLDQILTYVILGAAAV. At 130–159 the chain is on the extracellular side; it reads STEVLYLANKGDSAITWSAACGTFAGFCHK. The helical transmembrane segment at 160–180 threads the bilayer; the sequence is ATIAVVITFVAVICYAVLSLV. Residues 181–207 lie on the Cytoplasmic side of the membrane; it reads SSYRLFTKFDAPVNYPSKTIEATVFHG.

Belongs to the Casparian strip membrane proteins (CASP) family. As to quaternary structure, homodimer and heterodimers.

It localises to the cell membrane. The polypeptide is CASP-like protein F16 (F16) (Gossypium hirsutum (Upland cotton)).